Here is a 270-residue protein sequence, read N- to C-terminus: Undecaprenyl-diphosphatase 1 (270 aa).

The next 6 helical transmembrane spans lie at 41 to 61 (IEGF…VLLV), 88 to 108 (FRFI…GVLF), 117 to 137 (KDGV…LFLI), 192 to 212 (FSFL…ITDI), 218 to 238 (LGEL…ATYF), and 250 to 270 (GNLV…LIFA).

This sequence belongs to the UppP family.

Its subcellular location is the cell membrane. The enzyme catalyses di-trans,octa-cis-undecaprenyl diphosphate + H2O = di-trans,octa-cis-undecaprenyl phosphate + phosphate + H(+). In terms of biological role, catalyzes the dephosphorylation of undecaprenyl diphosphate (UPP). Confers resistance to bacitracin. The protein is Undecaprenyl-diphosphatase 1 of Bacillus licheniformis (strain ATCC 14580 / DSM 13 / JCM 2505 / CCUG 7422 / NBRC 12200 / NCIMB 9375 / NCTC 10341 / NRRL NRS-1264 / Gibson 46).